The primary structure comprises 195 residues: Neurturin (195 aa).

The signal sequence occupies residues 1–19; the sequence is MRRWKAAALVSLICSSLLS. Positions 20–95 are excised as a propeptide; it reads VWMCQEGLLL…RAGPRRRRAR (76 aa). Cystine bridges form between Cys101-Cys163, Cys128-Cys192, and Cys132-Cys194. Residues Arg147, Arg156, and Arg158 each coordinate heparan sulfate group.

This sequence belongs to the TGF-beta family. GDNF subfamily. Homodimer; disulfide-linked. Interacts with GFRA2 coreceptor and RET: forms a 2:2:2 ternary complex composed of NRTN ligand, GFRA2 and RET receptor. Also forms a 4:4:4 tetrameric complex composed of 4 copies of NRTN ligand, GFRA2 and RET receptor, which prevents endocytosis of RET. As to expression, widespread distribution.

The protein resides in the secreted. Functionally, growth factor that supports the survival of sympathetic neurons in culture. May regulate the development and maintenance of the CNS. Involved in the development of the neural crest. Might control the size of non-neuronal cell population such as haemopoietic cells. Acts by binding to its coreceptor, GFRA2, leading to autophosphorylation and activation of the RET receptor. Heparan sulfate-binding is required for signaling. This Mus musculus (Mouse) protein is Neurturin (Nrtn).